Here is a 967-residue protein sequence, read N- to C-terminus: RNA polymerase-associated protein RapA (967 aa).

One can recognise a Helicase ATP-binding domain in the interval 163–337 (EVGQRTAPRV…FARLSLLDPD (175 aa)). 176 to 183 (DEVGLGKT) serves as a coordination point for ATP. Residues 283-286 (DEAH) carry the DEAH box motif. The Helicase C-terminal domain maps to 489–660 (RLEWLITFLK…KFLQNPTALE (172 aa)).

This sequence belongs to the SNF2/RAD54 helicase family. RapA subfamily. As to quaternary structure, interacts with the RNAP. Has a higher affinity for the core RNAP than for the holoenzyme. Its ATPase activity is stimulated by binding to RNAP.

In terms of biological role, transcription regulator that activates transcription by stimulating RNA polymerase (RNAP) recycling in case of stress conditions such as supercoiled DNA or high salt concentrations. Probably acts by releasing the RNAP, when it is trapped or immobilized on tightly supercoiled DNA. Does not activate transcription on linear DNA. Probably not involved in DNA repair. The sequence is that of RNA polymerase-associated protein RapA from Pasteurella multocida (strain Pm70).